The primary structure comprises 192 residues: INO80 complex subunit C (192 aa).

Residues 1–44 form a disordered region; it reads MAAQIPIVATTSTPGIVRNSKKRPASPSHNGSSGGGYGASKKKK.

In terms of assembly, component of the chromatin remodeling INO80 complex; specifically part of a complex module associated with the helicase ATP-binding and the helicase C-terminal domain of INO80. Component of some MLL1/MLL complex, at least composed of the core components KMT2A/MLL1, ASH2L, HCFC1/HCF1, WDR5 and RBBP5, as well as the facultative components BACC1, CHD8, E2F6, HSP70, INO80C, KANSL1, LAS1L, MAX, MCRS1, MGA, MYST1/MOF, PELP1, PHF20, PRP31, RING2, RUVB1/TIP49A, RUVB2/TIP49B, SENP3, TAF1, TAF4, TAF6, TAF7, TAF9 and TEX10.

It is found in the nucleus. In terms of biological role, proposed core component of the chromatin remodeling INO80 complex which is involved in transcriptional regulation, DNA replication and probably DNA repair. This is INO80 complex subunit C (INO80C) from Homo sapiens (Human).